The sequence spans 237 residues: NADH-ubiquinone oxidoreductase assembly factor N7BML (237 aa).

Positions 214–223 are enriched in basic and acidic residues; the sequence is VEKERDDSGK. The segment at 214-237 is disordered; that stretch reads VEKERDDSGKPAEWTPKAAVRRRG.

Belongs to the complex I NDUFA12 subunit family.

Its subcellular location is the mitochondrion. Acts as an assembly factor of mitochondrial complex I. The sequence is that of NADH-ubiquinone oxidoreductase assembly factor N7BML from Yarrowia lipolytica (strain CLIB 122 / E 150) (Yeast).